The chain runs to 519 residues: DNA damage-binding protein CMR1 (519 aa).

The tract at residues 35–92 (AEAGLGPTGKSRAAASSKPRVKKPAPKKIKQEDIAPRRTSSRLKGIEADSEKAKRKAE) is disordered. A compositionally biased stretch (basic residues) spans 53–62 (PRVKKPAPKK). A compositionally biased stretch (basic and acidic residues) spans 78–92 (KGIEADSEKAKRKAE). WD repeat units lie at residues 240 to 280 (PHTR…AVEV), 287 to 327 (NEDQ…DQAE), 331 to 371 (LSEK…GKGD), 380 to 420 (EHES…EWAT), 442 to 485 (GRWV…LAQL), and 488 to 519 (DGITAVPAVAKFHPTLDWVAAGTASGKLCLWM).

It belongs to the WD repeat DDB2/WDR76 family.

DNA-binding protein that binds to both single- and double-stranded DNA. Binds preferentially to UV-damaged DNA. May be involved in DNA-metabolic processes. This is DNA damage-binding protein CMR1 from Phaeosphaeria nodorum (strain SN15 / ATCC MYA-4574 / FGSC 10173) (Glume blotch fungus).